Reading from the N-terminus, the 170-residue chain is ATP synthase subunit b (170 aa).

Residues 11 to 31 traverse the membrane as a helical segment; the sequence is GLNTGDIIFQLIAMLILLALL.

The protein belongs to the ATPase B chain family. In terms of assembly, F-type ATPases have 2 components, F(1) - the catalytic core - and F(0) - the membrane proton channel. F(1) has five subunits: alpha(3), beta(3), gamma(1), delta(1), epsilon(1). F(0) has three main subunits: a(1), b(2) and c(10-14). The alpha and beta chains form an alternating ring which encloses part of the gamma chain. F(1) is attached to F(0) by a central stalk formed by the gamma and epsilon chains, while a peripheral stalk is formed by the delta and b chains.

Its subcellular location is the cell membrane. Its function is as follows. F(1)F(0) ATP synthase produces ATP from ADP in the presence of a proton or sodium gradient. F-type ATPases consist of two structural domains, F(1) containing the extramembraneous catalytic core and F(0) containing the membrane proton channel, linked together by a central stalk and a peripheral stalk. During catalysis, ATP synthesis in the catalytic domain of F(1) is coupled via a rotary mechanism of the central stalk subunits to proton translocation. Component of the F(0) channel, it forms part of the peripheral stalk, linking F(1) to F(0). This chain is ATP synthase subunit b, found in Bacillus pumilus (strain SAFR-032).